We begin with the raw amino-acid sequence, 765 residues long: AMP deaminase 3 (765 aa).

Ser85 and Ser106 each carry phosphoserine. The Zn(2+) site is built by His315 and His317. Residues His317 and 386-391 (KFNSKY) each bind substrate. His584 is a binding site for Zn(2+). Glu587 contributes to the substrate binding site. His606 (proton acceptor) is an active-site residue. A Zn(2+)-binding site is contributed by Asp661. 662-665 (DPMQ) provides a ligand contact to substrate.

It belongs to the metallo-dependent hydrolases superfamily. Adenosine and AMP deaminases family. Homotetramer. It depends on Zn(2+) as a cofactor. In terms of tissue distribution, expressed in adult tissues such as aorta, heart, kidney, lung, muscle and thyroid. Weakly expressed in thyroid and not detected in liver.

The catalysed reaction is AMP + H2O + H(+) = IMP + NH4(+). Its pathway is purine metabolism; IMP biosynthesis via salvage pathway; IMP from AMP: step 1/1. Functionally, AMP deaminase plays a critical role in energy metabolism. The sequence is that of AMP deaminase 3 from Rattus norvegicus (Rat).